The sequence spans 920 residues: 2-oxoadipate dehydrogenase complex component E1 (920 aa).

A disordered region spans residues 299–322 (QGKTRGRQQVKQDGDYSTDPHSRP). The segment covering 308-322 (VKQDGDYSTDPHSRP) has biased composition (basic and acidic residues).

This sequence belongs to the alpha-ketoglutarate dehydrogenase family. As to quaternary structure, the 2-oxoadipate dehydrogenase complex is composed of OADH (2-oxoadipate dehydrogenase; E1a), DLST (dihydrolipoamide succinyltransferase; E2) and DLD (dihydrolipoamide dehydrogenase; E3). E1a functional unit is a dimer. It depends on thiamine diphosphate as a cofactor.

The protein localises to the mitochondrion. The catalysed reaction is N(6)-[(R)-lipoyl]-L-lysyl-[protein] + 2-oxoadipate + H(+) = N(6)-[(R)-S(8)-glutaryldihydrolipoyl]-L-lysyl-[protein] + CO2. It participates in amino-acid degradation. In terms of biological role, 2-oxoadipate dehydrogenase (E1a) component of the 2-oxoadipate dehydrogenase complex (OADHC). Participates in the first step, rate limiting for the overall conversion of 2-oxoadipate (alpha-ketoadipate) to glutaryl-CoA and CO(2) catalyzed by the whole OADHC. Catalyzes the irreversible decarboxylation of 2-oxoadipate via the thiamine diphosphate (ThDP) cofactor and subsequent transfer of the decarboxylated acyl intermediate on an oxidized dihydrolipoyl group that is covalently amidated to the E2 enzyme (dihydrolipoyllysine-residue succinyltransferase or DLST). Can catalyze the decarboxylation of 2-oxoglutarate in vitro, but at a much lower rate than 2-oxoadipate. Responsible for the last step of L-lysine, L-hydroxylysine and L-tryptophan catabolism with the common product being 2-oxoadipate. This Danio rerio (Zebrafish) protein is 2-oxoadipate dehydrogenase complex component E1 (dhtkd1).